Reading from the N-terminus, the 149-residue chain is MHCPFCTAVDTKVIDSRLVGDGSQVRRRRQCLVCHERFTTFEVAELVMPRVVKSDEIREPFDEEKLRRGMLKALEKRPVSSDDVEAAINHIKSQLRATGEREIPSKQIGNFVMEQLKKLDKVAYIRFASVYRSFEDVRDFGEEIAKLQD.

A zinc finger lies at 3-34 (CPFCTAVDTKVIDSRLVGDGSQVRRRRQCLVC). The ATP-cone domain maps to 49 to 139 (PRVVKSDEIR…VYRSFEDVRD (91 aa)).

Belongs to the NrdR family. Zn(2+) serves as cofactor.

In terms of biological role, negatively regulates transcription of bacterial ribonucleotide reductase nrd genes and operons by binding to NrdR-boxes. The sequence is that of Transcriptional repressor NrdR from Proteus mirabilis (strain HI4320).